The following is a 681-amino-acid chain: uncharacterized protein (681 aa).

This sequence in the N-terminal section; belongs to the purine/pyrimidine phosphoribosyltransferase family.

This is an uncharacterized protein from Mycobacterium tuberculosis (strain CDC 1551 / Oshkosh).